The sequence spans 511 residues: Gap junction alpha-3 protein (511 aa).

Residues 2–15 (GDWSFLGRLLENAQ) lie within the membrane without spanning it. Over 16–19 (EHST) the chain is Cytoplasmic. Residues 20-40 (VIGKVWLTVLFIFRILVLGAA) form a helical membrane-spanning segment. At 41 to 71 (AEEVWGDEQSDFTCNTQQPGCENVCYDKAFP) the chain is on the extracellular side. 3 disulfides stabilise this stretch: Cys54–Cys214, Cys61–Cys208, and Cys65–Cys203. Residues 72 to 92 (ISHIRFWVLQIIFVSTPTLIY) form a helical membrane-spanning segment. Residues 93–174 (LGHVLHIVRM…GALLRTYIFN (82 aa)) lie on the Cytoplasmic side of the membrane. A compositionally biased stretch (basic and acidic residues) spans 110-119 (EEELKKRGSV). The segment at 110–143 (EEELKKRGSVKDNNYPGAATSGGGSGGGNNFKDP) is disordered. Residues 129–138 (TSGGGSGGGN) show a composition bias toward gly residues. The helical transmembrane segment at 175–195 (IIFKTLFEVGFIVGQYFLYGF) threads the bilayer. Topologically, residues 196–223 (ELKPVYQCSRPPCPHTVDCFISRPTEKT) are extracellular. The chain crosses the membrane as a helical span at residues 224 to 244 (IFIIFMLVVASVSLLLNMLEI). Topologically, residues 245-511 (YHLGWKKLKQ…SRARSDDLAV (267 aa)) are cytoplasmic. Residues 397–511 (AEQQGKAPSS…SRARSDDLAV (115 aa)) are disordered. Low complexity-rich tracts occupy residues 403-415 (APSS…TPSS) and 440-456 (TTTN…ASGS).

It belongs to the connexin family. As to quaternary structure, a hemichannel or connexon is composed of a hexamer of connexins. A functional gap junction is formed by the apposition of two hemichannels. During early stages of lens development, interacts with the C-terminus of MIP. Detected in eye lens.

It localises to the cell membrane. It is found in the cell junction. Its subcellular location is the gap junction. Functionally, structural component of lens fiber gap junctions. Gap junctions are dodecameric channels that connect the cytoplasm of adjoining cells. They are formed by the docking of two hexameric hemichannels, one from each cell membrane. Small molecules and ions diffuse from one cell to a neighboring cell via the central pore. This Gallus gallus (Chicken) protein is Gap junction alpha-3 protein (GJA3).